A 310-amino-acid chain; its full sequence is Mitochondrial citrate transporter F (310 aa).

Solcar repeat units follow at residues 23 to 108 (KKVH…LKNH), 115 to 207 (PPGL…FKRL), and 216 to 303 (DNMG…HKKL). 6 helical membrane passes run 29–49 (FWFG…LDLV), 85–105 (SAAI…YEEL), 122–142 (IGMA…ADVL), 186–206 (NSTR…TFKR), 222–242 (FTAS…VDVI), and 275–296 (AFRG…TFIF).

This sequence belongs to the mitochondrial carrier (TC 2.A.29) family.

The protein localises to the mitochondrion inner membrane. In terms of biological role, mitochondrial transporter that does not mediate citrate export from mitochondria to cytoplasm. Its exact function has still to be determined. The chain is Mitochondrial citrate transporter F from Aspergillus niger (strain ATCC 1015 / CBS 113.46 / FGSC A1144 / LSHB Ac4 / NCTC 3858a / NRRL 328 / USDA 3528.7).